The sequence spans 189 residues: Putative nucleotidase BC_3386 (189 aa).

The protein belongs to the 5'(3')-deoxyribonucleotidase family.

This Bacillus cereus (strain ATCC 14579 / DSM 31 / CCUG 7414 / JCM 2152 / NBRC 15305 / NCIMB 9373 / NCTC 2599 / NRRL B-3711) protein is Putative nucleotidase BC_3386.